Consider the following 759-residue polypeptide: Subtilisin-like protease SBT3.10 (759 aa).

The signal sequence occupies residues 1-25; sequence MSKTIILLAFFLSIVLNVQISFVVA. Positions 26–108 are cleaved as a propeptide — activation peptide; the sequence is ESKVYVVYLG…VIPNTLYEMT (83 aa). The 78-residue stretch at 29-106 folds into the Inhibitor I9 domain; the sequence is VYVVYLGEKE…VQVIPNTLYE (78 aa). The Peptidase S8 domain occupies 112–606; the sequence is TWDYLGVSPG…GGLINPEKAV (495 aa). D142 serves as the catalytic Charge relay system. N175 and N202 each carry an N-linked (GlcNAc...) asparagine glycan. The Charge relay system role is filled by H218. Residues N233 and N361 are each glycosylated (N-linked (GlcNAc...) asparagine). In terms of domain architecture, PA spans 390 to 464; that stretch reads DCEKLSANPK…ELGTDILFYI (75 aa). S537 (charge relay system) is an active-site residue.

Belongs to the peptidase S8 family.

It localises to the secreted. This is Subtilisin-like protease SBT3.10 from Arabidopsis thaliana (Mouse-ear cress).